Reading from the N-terminus, the 704-residue chain is Elongation factor G 1 (704 aa).

Positions 8–291 (ERYRNIGISA…AVIDYLPSPA (284 aa)) constitute a tr-type G domain. Residues 17 to 24 (AHIDAGKT), 88 to 92 (DTPGH), and 142 to 145 (NKMD) each bind GTP.

This sequence belongs to the TRAFAC class translation factor GTPase superfamily. Classic translation factor GTPase family. EF-G/EF-2 subfamily.

Its subcellular location is the cytoplasm. Catalyzes the GTP-dependent ribosomal translocation step during translation elongation. During this step, the ribosome changes from the pre-translocational (PRE) to the post-translocational (POST) state as the newly formed A-site-bound peptidyl-tRNA and P-site-bound deacylated tRNA move to the P and E sites, respectively. Catalyzes the coordinated movement of the two tRNA molecules, the mRNA and conformational changes in the ribosome. In Burkholderia thailandensis (strain ATCC 700388 / DSM 13276 / CCUG 48851 / CIP 106301 / E264), this protein is Elongation factor G 1.